We begin with the raw amino-acid sequence, 83 residues long: Large ribosomal subunit protein bL27 (83 aa).

The tract at residues 1-25 (MAHKKGQGASRNGRDSESKRLGLKV) is disordered.

Belongs to the bacterial ribosomal protein bL27 family.

The polypeptide is Large ribosomal subunit protein bL27 (Chlamydia trachomatis serovar L2 (strain ATCC VR-902B / DSM 19102 / 434/Bu)).